We begin with the raw amino-acid sequence, 187 residues long: ADP-ribosylation factor-like protein 9 (187 aa).

Residues glycine 25 to threonine 32, glutamate 69 to serine 73, and asparagine 126 to aspartate 129 contribute to the GTP site.

It belongs to the small GTPase superfamily. Arf family.

The sequence is that of ADP-ribosylation factor-like protein 9 (ARL9) from Homo sapiens (Human).